The following is a 383-amino-acid chain: ATP phosphoribosyltransferase regulatory subunit (383 aa).

Belongs to the class-II aminoacyl-tRNA synthetase family. HisZ subfamily. In terms of assembly, heteromultimer composed of HisG and HisZ subunits.

The protein localises to the cytoplasm. It functions in the pathway amino-acid biosynthesis; L-histidine biosynthesis; L-histidine from 5-phospho-alpha-D-ribose 1-diphosphate: step 1/9. Its function is as follows. Required for the first step of histidine biosynthesis. May allow the feedback regulation of ATP phosphoribosyltransferase activity by histidine. In Janthinobacterium sp. (strain Marseille) (Minibacterium massiliensis), this protein is ATP phosphoribosyltransferase regulatory subunit.